A 231-amino-acid polypeptide reads, in one-letter code: Orotate phosphoribosyltransferase (231 aa).

5-phospho-alpha-D-ribose 1-diphosphate-binding positions include Lys27, 79–80, Arg106, Lys107, Lys110, His112, and 133–141; these read YK and DDVMTAGTA. Orotate-binding residues include Thr137 and Arg166.

It belongs to the purine/pyrimidine phosphoribosyltransferase family. PyrE subfamily. In terms of assembly, homodimer. Requires Mg(2+) as cofactor.

It carries out the reaction orotidine 5'-phosphate + diphosphate = orotate + 5-phospho-alpha-D-ribose 1-diphosphate. The protein operates within pyrimidine metabolism; UMP biosynthesis via de novo pathway; UMP from orotate: step 1/2. Functionally, catalyzes the transfer of a ribosyl phosphate group from 5-phosphoribose 1-diphosphate to orotate, leading to the formation of orotidine monophosphate (OMP). The sequence is that of Orotate phosphoribosyltransferase from Bifidobacterium adolescentis (strain ATCC 15703 / DSM 20083 / NCTC 11814 / E194a).